Consider the following 213-residue polypeptide: MAKVDFSLYLITDRHQAGGRDLLAVVEGALAGGVRCVQLREKDLPARTLLELARAMRRLTDRFGARLLINDRVDIALAAGADGVHLGEEGMPAAVARELLGSGRLIGVSCHGRGGAAAAVAQGADFITFGPVYPTPSKAAYGEPVGIDQLAATTKEIHIPVFALGGIKEANIPEALAAGAAGVALISAIIADPDPRERARALLALLPPRTRDE.

Residues 38-42 (QLREK) and Asn-70 contribute to the 4-amino-2-methyl-5-(diphosphooxymethyl)pyrimidine site. A Mg(2+)-binding site is contributed by Asp-71. Residue Ser-109 coordinates 4-amino-2-methyl-5-(diphosphooxymethyl)pyrimidine. Residue 135-137 (TPS) coordinates 2-[(2R,5Z)-2-carboxy-4-methylthiazol-5(2H)-ylidene]ethyl phosphate. Lys-138 provides a ligand contact to 4-amino-2-methyl-5-(diphosphooxymethyl)pyrimidine. 2-[(2R,5Z)-2-carboxy-4-methylthiazol-5(2H)-ylidene]ethyl phosphate contacts are provided by residues Gly-166 and 186-187 (IS).

The protein belongs to the thiamine-phosphate synthase family. Mg(2+) is required as a cofactor.

It catalyses the reaction 2-[(2R,5Z)-2-carboxy-4-methylthiazol-5(2H)-ylidene]ethyl phosphate + 4-amino-2-methyl-5-(diphosphooxymethyl)pyrimidine + 2 H(+) = thiamine phosphate + CO2 + diphosphate. The catalysed reaction is 2-(2-carboxy-4-methylthiazol-5-yl)ethyl phosphate + 4-amino-2-methyl-5-(diphosphooxymethyl)pyrimidine + 2 H(+) = thiamine phosphate + CO2 + diphosphate. The enzyme catalyses 4-methyl-5-(2-phosphooxyethyl)-thiazole + 4-amino-2-methyl-5-(diphosphooxymethyl)pyrimidine + H(+) = thiamine phosphate + diphosphate. It participates in cofactor biosynthesis; thiamine diphosphate biosynthesis; thiamine phosphate from 4-amino-2-methyl-5-diphosphomethylpyrimidine and 4-methyl-5-(2-phosphoethyl)-thiazole: step 1/1. In terms of biological role, condenses 4-methyl-5-(beta-hydroxyethyl)thiazole monophosphate (THZ-P) and 2-methyl-4-amino-5-hydroxymethyl pyrimidine pyrophosphate (HMP-PP) to form thiamine monophosphate (TMP). The polypeptide is Putative thiamine-phosphate synthase (thiE) (Geobacter sulfurreducens (strain ATCC 51573 / DSM 12127 / PCA)).